The primary structure comprises 431 residues: Glucose-1-phosphate adenylyltransferase (431 aa).

K39 contacts beta-D-fructose 1,6-bisphosphate. 3 residues coordinate AMP: R40, H46, and R52. Y114 serves as a coordination point for alpha-D-glucose 1-phosphate. Position 130 (R130) interacts with AMP. Alpha-D-glucose 1-phosphate-binding positions include G179, 194-195, and S212; that span reads EK. E370 and R386 together coordinate AMP. Beta-D-fructose 1,6-bisphosphate-binding positions include 419 to 423 and 429 to 431; these read REMLR and QER.

This sequence belongs to the bacterial/plant glucose-1-phosphate adenylyltransferase family. Homotetramer.

It catalyses the reaction alpha-D-glucose 1-phosphate + ATP + H(+) = ADP-alpha-D-glucose + diphosphate. Its pathway is glycan biosynthesis; glycogen biosynthesis. Allosterically activated by fructose-1,6-bisphosphate (F16BP) and inhibited by AMP. Its function is as follows. Involved in the biosynthesis of ADP-glucose, a building block required for the elongation reactions to produce glycogen. Catalyzes the reaction between ATP and alpha-D-glucose 1-phosphate (G1P) to produce pyrophosphate and ADP-Glc. This Escherichia coli O127:H6 (strain E2348/69 / EPEC) protein is Glucose-1-phosphate adenylyltransferase.